A 129-amino-acid polypeptide reads, in one-letter code: UPF0325 protein ESA_03178 (129 aa).

It belongs to the UPF0325 family.

The chain is UPF0325 protein ESA_03178 from Cronobacter sakazakii (strain ATCC BAA-894) (Enterobacter sakazakii).